We begin with the raw amino-acid sequence, 414 residues long: Isocitrate dehydrogenase [NADP] cytoplasmic (414 aa).

Ser2 carries the post-translational modification N-acetylserine. Tyr42 bears the Phosphotyrosine mark. Thr75–Thr77 provides a ligand contact to NADP(+). Substrate is bound at residue Thr77. Lys81 carries the N6-acetyllysine modification. Arg82 contributes to the NADP(+) binding site. Substrate is bound by residues Ser94–Arg100 and Arg109. Lys126 carries the post-translational modification N6-succinyllysine. Positions 132 and 212 each coordinate substrate. Residues Lys224, Lys233, and Lys243 each carry the N6-acetyllysine modification. Asp252 is a binding site for Mn(2+). Lys260 lines the NADP(+) pocket. Mn(2+) is bound by residues Asp275 and Asp279. Gly310 to His315 contacts NADP(+). Lys321 carries the post-translational modification N6-acetyllysine. Asn328 contacts NADP(+). Ser389 is modified (phosphoserine). An N6-succinyllysine modification is found at Lys400.

This sequence belongs to the isocitrate and isopropylmalate dehydrogenases family. Homodimer. The cofactor is Mg(2+). It depends on Mn(2+) as a cofactor. In terms of processing, acetylation at Lys-374 dramatically reduces catalytic activity.

The protein localises to the cytoplasm. The protein resides in the cytosol. The enzyme catalyses D-threo-isocitrate + NADP(+) = 2-oxoglutarate + CO2 + NADPH. Catalyzes the NADP(+)-dependent oxidative decarboxylation of isocitrate (D-threo-isocitrate) to 2-ketoglutarate (2-oxoglutarate), which is required by other enzymes such as the phytanoyl-CoA dioxygenase. Plays a critical role in the generation of NADPH, an important cofactor in many biosynthesis pathways. May act as a corneal epithelial crystallin and may be involved in maintaining corneal epithelial transparency. The protein is Isocitrate dehydrogenase [NADP] cytoplasmic (IDH1) of Microtus ochrogaster (Prairie vole).